Reading from the N-terminus, the 258-residue chain is Type III pantothenate kinase (258 aa).

6-13 (DVGNSDTV) contacts ATP. 108–111 (GSDR) is a binding site for substrate. D110 serves as the catalytic Proton acceptor. Residue D130 coordinates K(+). Residue T133 coordinates ATP. Residue T185 participates in substrate binding.

The protein belongs to the type III pantothenate kinase family. Homodimer. Requires NH4(+) as cofactor. K(+) is required as a cofactor.

It is found in the cytoplasm. It carries out the reaction (R)-pantothenate + ATP = (R)-4'-phosphopantothenate + ADP + H(+). Its pathway is cofactor biosynthesis; coenzyme A biosynthesis; CoA from (R)-pantothenate: step 1/5. In terms of biological role, catalyzes the phosphorylation of pantothenate (Pan), the first step in CoA biosynthesis. The sequence is that of Type III pantothenate kinase from Thermobifida fusca (strain YX).